A 181-amino-acid chain; its full sequence is Adenine phosphoribosyltransferase (181 aa).

It belongs to the purine/pyrimidine phosphoribosyltransferase family. Homodimer.

The protein resides in the cytoplasm. It carries out the reaction AMP + diphosphate = 5-phospho-alpha-D-ribose 1-diphosphate + adenine. Its pathway is purine metabolism; AMP biosynthesis via salvage pathway; AMP from adenine: step 1/1. Functionally, catalyzes a salvage reaction resulting in the formation of AMP, that is energically less costly than de novo synthesis. In Vibrio campbellii (strain ATCC BAA-1116), this protein is Adenine phosphoribosyltransferase.